The sequence spans 132 residues: NAD(P) transhydrogenase subunit alpha part 2 (132 aa).

3 helical membrane-spanning segments follow: residues P43–W63, P72–I92, and L103–T123.

In terms of assembly, complex of an alpha and a beta chain; in Rickettsia, the alpha chain seems to be made of two subunits.

The protein localises to the cell inner membrane. It carries out the reaction NAD(+) + NADPH + H(+)(in) = NADH + NADP(+) + H(+)(out). The transhydrogenation between NADH and NADP is coupled to respiration and ATP hydrolysis and functions as a proton pump across the membrane. This chain is NAD(P) transhydrogenase subunit alpha part 2 (pntAB), found in Rickettsia prowazekii (strain Madrid E).